Reading from the N-terminus, the 62-residue chain is Potassium channel toxin gamma-KTx 1.1 (62 aa).

The N-terminal stretch at 1–20 is a signal peptide; that stretch reads MKVLILIMIIASLMIMGVEM. 4 disulfide bridges follow: cysteine 25/cysteine 43, cysteine 31/cysteine 54, cysteine 40/cysteine 59, and cysteine 44/cysteine 61.

Belongs to the ergtoxin family. Gamma-KTx 1 subfamily. After protein storage at -20 Celsius degrees during a couple of months, the Met-55 of a small number of toxins is naturally oxidized. This oxidized form is about three orders of magnitude less efficient (IC(50)=15 uM) than non-oxidized form. As to expression, expressed by the venom gland.

The protein resides in the secreted. Functionally, blocks human and rat Kv11.1/KCNH2/ERG1 and Kv11.3/KCNH7/ERG3, as well as rat (but not human) Kv11.2/KCNH6/ERG2 by binding to channel outer vestibule (S5P domain) with a 1:1 stoichiometry. Inhibition data are the following: hERG1 (reversible, IC(50)~7 nM), rERG1 (reversible, Kd=6.8 nM), rERG2 (irreversible, Kd=2.8 nM), hERG3 (irreversible, Kd=4.05 nM) and rERG3 (reversible, Kd=38.1 nM) potassium channels. The toxin potency is not affected by elevating potassium ion concentration from 2 to 98 mM. This toxin only blocks channels in a closed state. At high toxin concentrations, block of Kv11.1/KCNH2/ERG1 macroscopic current is incomplete (93.5%). This suggests a kinetic mechanism model with two different states of toxin-channel binding (T+C=TC*=TC; in the TC* state, the toxin binds the channel but does not occlude the pore, whereas in the TC state the toxin binds and occludes the pore). In this model, incomplete block is explained by the relatively fast dissociation rate from the blocked channel conformation (TC) relative to the rate of conversion of the toxin-channel encounter complex (TC*) to the blocked channel conformation (TC). In Centruroides noxius (Mexican scorpion), this protein is Potassium channel toxin gamma-KTx 1.1.